The following is a 76-amino-acid chain: Putative membrane protein insertion efficiency factor (76 aa).

The protein belongs to the UPF0161 family.

It localises to the cell inner membrane. In terms of biological role, could be involved in insertion of integral membrane proteins into the membrane. The protein is Putative membrane protein insertion efficiency factor of Paraburkholderia phymatum (strain DSM 17167 / CIP 108236 / LMG 21445 / STM815) (Burkholderia phymatum).